Reading from the N-terminus, the 826-residue chain is Glycerol-3-phosphate acyltransferase 1, mitochondrial (826 aa).

The Cytoplasmic segment spans residues 1–87 (MDESALTLGT…FFNPSIPSLG (87 aa)). The segment at 80-120 (NPSIPSLGLRNVIYINETHTRHRGWLARRLSYVLFIQERDV) is important for mitochondrial localization. The stretch at 88-118 (LRNVIYINETHTRHRGWLARRLSYVLFIQER) is an intramembrane region. Over 119–826 (DVHKGMFATN…LEYILSFVVL (708 aa)) the chain is Cytoplasmic. An HXXXXD motif motif is present at residues 230–235 (HRSHID). Residues R278, R279, K288, R293, and R328 each contribute to the CoA site. S380 bears the Phosphoserine mark. R462 is a CoA binding site. S686 and S693 each carry phosphoserine. N6-acetyllysine is present on residues K778 and K782.

The protein belongs to the GPAT/DAPAT family.

The protein localises to the mitochondrion outer membrane. The enzyme catalyses sn-glycerol 3-phosphate + an acyl-CoA = a 1-acyl-sn-glycero-3-phosphate + CoA. The catalysed reaction is (9Z,12Z)-octadecadienoyl-CoA + sn-glycerol 3-phosphate = 1-(9Z,12Z)-octadecadienoyl-sn-glycero-3-phosphate + CoA. It carries out the reaction sn-glycerol 3-phosphate + (9Z)-octadecenoyl-CoA = 1-(9Z-octadecenoyl)-sn-glycero-3-phosphate + CoA. It catalyses the reaction sn-glycerol 3-phosphate + octadecanoyl-CoA = 1-octadecanoyl-sn-glycero-3-phosphate + CoA. The enzyme catalyses sn-glycerol 3-phosphate + hexadecanoyl-CoA = 1-hexadecanoyl-sn-glycero-3-phosphate + CoA. The catalysed reaction is dodecanoyl-CoA + sn-glycerol 3-phosphate = 1-dodecanoyl-sn-glycerol 3-phosphate + CoA. It carries out the reaction 1-acyl-sn-glycero-3-phospho-(1'-sn-glycerol) + an acyl-CoA = a 1,2-diacyl-sn-glycero-3-phospho-(1'-sn-glycerol) + CoA. Its pathway is phospholipid metabolism; CDP-diacylglycerol biosynthesis; CDP-diacylglycerol from sn-glycerol 3-phosphate: step 1/3. Its function is as follows. Mitochondrial membrane protein that catalyzes the essential first step of biosynthesis of glycerolipids such as triglycerides, phosphatidic acids and lysophosphatidic acids. Esterifies acyl-group from acyl-coenzyme A (acyl-CoA) to the sn-1 position of glycerol-3-phosphate, to produce lysophosphatidic acid. Has a narrow hydrophobic binding cleft that selects for a linear acyl chain. Catalytic activity is higher for substrates with a 16-carbon acyl chain. This is Glycerol-3-phosphate acyltransferase 1, mitochondrial from Sus scrofa (Pig).